The primary structure comprises 245 residues: CX3CL1-binding protein 2 (245 aa).

A signal peptide spans methionine 1–asparagine 25. At phenylalanine 26 to threonine 164 the chain is on the cytoplasmic side. Residues arginine 46–glutamate 50 are PEXEL motif. A disordered region spans residues glutamine 52 to asparagine 71. The chain crosses the membrane as a helical span at residues isoleucine 165–alanine 185. The Extracellular segment spans residues alanine 186–alanine 196. A helical membrane pass occupies residues isoleucine 197–valine 217. The Cytoplasmic portion of the chain corresponds to proline 218–phenylalanine 245.

As to quaternary structure, monomer. May form (via the first cytoplasmic domain) homodimers or homotrimers; disulfide-linked. Interacts with MAHRP1. May interact (via first cytoplasmic domain) with SBP1; the interaction is likely to occur at the ring stage in the Maurer's clefts and is weaken by ATP. Interacts (via extracellular domain) with human chemokine CX3CL1; the interaction mediates the adhesion of infected erythrocytes with endothelial cells.

Its subcellular location is the host cell membrane. In terms of biological role, during the asexual blood stage and probably at the ring/trophozoite stages, plays a role in Maurer's cleft formation and/or morphology. Also, involved in the loading of the virulence factor EMP1 into the Maurer's cleft membrane. By binding to host chemokine CX3CL1, mediates the cytoadherence of host erythrocytes infected with parasite mature forms (late trophozoite and schizont) to endothelial cells, which sequesters them away from the circulation and thus prevents their elimination by the host spleen. In Plasmodium falciparum (isolate 3D7), this protein is CX3CL1-binding protein 2.